Reading from the N-terminus, the 86-residue chain is UPF0297 protein SERP1181 (86 aa).

Belongs to the UPF0297 family.

In Staphylococcus epidermidis (strain ATCC 35984 / DSM 28319 / BCRC 17069 / CCUG 31568 / BM 3577 / RP62A), this protein is UPF0297 protein SERP1181.